We begin with the raw amino-acid sequence, 81 residues long: U17-lycotoxin-Ls1a (81 aa).

The N-terminal stretch at 1 to 22 (MSSKVQAVLLLVGVITFLAVHA) is a signal peptide. Positions 23 to 34 (QEELSENTESER) are excised as a propeptide. 3 cysteine pairs are disulfide-bonded: Cys-36-Cys-51, Cys-50-Cys-67, and Cys-58-Cys-65.

It belongs to the neurotoxin 02 (plectoxin) family. Expressed by the venom gland.

It is found in the secreted. This is U17-lycotoxin-Ls1a from Lycosa singoriensis (Wolf spider).